The sequence spans 120 residues: Flagellar protein FliT (120 aa).

A required for homodimerization region spans residues 1 to 50; the sequence is MERHQHLLSEYQQILTLSEQMLMLATVENWNALVDLEMTYLKAVENTANI. The segment at 60–98 is fliD binding; it reads LQELLRQKLRSILENEIEIKRLLQRRLDKLSELVGQSTR.

The protein belongs to the FliT family. In terms of assembly, homodimer. Interacts with FliD and FlhC.

The protein resides in the cytoplasm. It localises to the cytosol. Functionally, dual-function protein that regulates the transcription of class 2 flagellar operons and that also acts as an export chaperone for the filament-capping protein FliD. As a transcriptional regulator, acts as an anti-FlhDC factor; it directly binds FlhC, thus inhibiting the binding of the FlhC/FlhD complex to class 2 promoters, resulting in decreased expression of class 2 flagellar operons. As a chaperone, effects FliD transition to the membrane by preventing its premature polymerization, and by directing it to the export apparatus. The protein is Flagellar protein FliT of Yersinia pestis bv. Antiqua (strain Antiqua).